The primary structure comprises 416 residues: F-box/FBD/LRR-repeat protein At1g13570 (416 aa).

One can recognise an F-box domain in the interval 5–53; sequence PDFISDLPQSIIENILTRLSIRDAIRTSVLSSKWRYKWSTLTDLVFDEK. LRR repeat units lie at residues 115–142, 164–189, 203–229, 238–263, and 294–321; these read VLKL…ELCH, QILV…SLSY, MYLY…SVSM, FEQS…VGYI, and CFED…KVSA. The FBD domain maps to 346–384; the sequence is LPSLESVKITDASGIRYELEFIRFLLGTSPVLETVTVSS.

The sequence is that of F-box/FBD/LRR-repeat protein At1g13570 from Arabidopsis thaliana (Mouse-ear cress).